We begin with the raw amino-acid sequence, 325 residues long: Ribose-phosphate pyrophosphokinase (325 aa).

Residues 45–47 and 104–105 each bind ATP; these read NGE and RQ. Positions 138 and 178 each coordinate Mg(2+). The active site involves lysine 202. Residues arginine 204, aspartate 230, and 234-238 each bind D-ribose 5-phosphate; that span reads DTGGT.

This sequence belongs to the ribose-phosphate pyrophosphokinase family. Class I subfamily. In terms of assembly, homohexamer. Mg(2+) is required as a cofactor.

It localises to the cytoplasm. It catalyses the reaction D-ribose 5-phosphate + ATP = 5-phospho-alpha-D-ribose 1-diphosphate + AMP + H(+). It functions in the pathway metabolic intermediate biosynthesis; 5-phospho-alpha-D-ribose 1-diphosphate biosynthesis; 5-phospho-alpha-D-ribose 1-diphosphate from D-ribose 5-phosphate (route I): step 1/1. In terms of biological role, involved in the biosynthesis of the central metabolite phospho-alpha-D-ribosyl-1-pyrophosphate (PRPP) via the transfer of pyrophosphoryl group from ATP to 1-hydroxyl of ribose-5-phosphate (Rib-5-P). The polypeptide is Ribose-phosphate pyrophosphokinase (Corynebacterium glutamicum (strain ATCC 13032 / DSM 20300 / JCM 1318 / BCRC 11384 / CCUG 27702 / LMG 3730 / NBRC 12168 / NCIMB 10025 / NRRL B-2784 / 534)).